A 772-amino-acid chain; its full sequence is Protocadherin beta-6 (772 aa).

The first 28 residues, 1–28 (METTLAKTPEKRQVVFLAILLLLWEAGS), serve as a signal peptide directing secretion. 5 Cadherin domains span residues 31–133 (IRYS…SPEF), 134–242 (PDTE…APEF), 243–346 (VQSL…APKL), 347–450 (TISS…APAF), and 451–560 (TQTS…APFI). Over 31-690 (IRYSIPEETE…QDEDMLTLYL (660 aa)) the chain is Extracellular. The cysteines at positions 96 and 102 are disulfide-linked. An N-linked (GlcNAc...) asparagine glycan is attached at Asn169. O-linked (Man) serine glycosylation occurs at Ser223. O-linked (Man) threonine glycosylation is present at Thr225. Asn417 carries an N-linked (GlcNAc...) asparagine glycan. The N-linked (GlcNAc...) asparagine glycan is linked to Asn566. Residues 575-675 (LPRAAEPGYL…SQPYLPLPEV (101 aa)) form the Cadherin 6 domain. A helical transmembrane segment spans residues 691–711 (VIALASVSSLFLLSVLLFVGV). The Cytoplasmic portion of the chain corresponds to 712-772 (RLCRRVREAS…DFKFLNHYSQ (61 aa)).

In terms of assembly, forms homodimers in trans (molecules expressed by two different cells). Forms promiscuous heterodimers in cis (at the plasma membrane of the same cell) with other protocadherins.

The protein resides in the cell membrane. Its function is as follows. Calcium-dependent cell-adhesion protein involved in cells self-recognition and non-self discrimination. Thereby, it is involved in the establishment and maintenance of specific neuronal connections in the brain. This is Protocadherin beta-6 from Mus musculus (Mouse).